The sequence spans 266 residues: Large ribosomal subunit protein uL4 (266 aa).

This sequence belongs to the universal ribosomal protein uL4 family. Part of the 50S ribosomal subunit.

Functionally, one of the primary rRNA binding proteins, this protein initially binds near the 5'-end of the 23S rRNA. It is important during the early stages of 50S assembly. It makes multiple contacts with different domains of the 23S rRNA in the assembled 50S subunit and ribosome. Forms part of the polypeptide exit tunnel. In Sulfurisphaera tokodaii (strain DSM 16993 / JCM 10545 / NBRC 100140 / 7) (Sulfolobus tokodaii), this protein is Large ribosomal subunit protein uL4.